Reading from the N-terminus, the 188-residue chain is MEQRLAEFREARKRASLVAQPSTSSQSVQTSGAKAEPAAATPKTATGWLTRFLKRKANPAIAQAQPNQPQEAGQQLPESTAVPLPSSCRQSFLTNITFLKVLLWLVLLGLFVELEFGLAYFVLSMFYWMYVGTRGPEEKKEGEKSAYSVFNPGCEAIQGTLTAEQLEQELQLRPPQGSRTSPSCSSYP.

The segment covering 1-10 has biased composition (basic and acidic residues); that stretch reads MEQRLAEFRE. Disordered regions lie at residues 1–43 and 60–80; these read MEQR…ATPK and AIAQ…PEST. At 1 to 100 the chain is on the cytoplasmic side; the sequence is MEQRLAEFRE…SFLTNITFLK (100 aa). 2 stretches are compositionally biased toward low complexity: residues 22–43 and 60–75; these read STSS…ATPK and AIAQ…AGQQ. The tract at residues 86–100 is middle helical (MH); sequence SSCRQSFLTNITFLK. Residues 101–121 constitute an intramembrane region (helical); that stretch reads VLLWLVLLGLFVELEFGLAYF. Residues 122–188 lie on the Cytoplasmic side of the membrane; it reads VLSMFYWMYV…RTSPSCSSYP (67 aa).

Belongs to the SAYSD1 family. Associates (via N-terminus) with ribosomes. As to expression, enriched in testis; predominantly expressed in round and elongating spermatids.

It localises to the endoplasmic reticulum membrane. The protein localises to the cytoplasmic vesicle membrane. Ufmylation 'reader' component of a translocation-associated quality control pathway, a mechanism that takes place when a ribosome has stalled during translation, and which is required to degrade clogged substrates. Specifically recognizes and binds ufmylated ribosomes when a ribosome has stalled, promoting the transport of stalled nascent chain via the TRAPP complex to lysosomes for degradation. The chain is SAYSvFN domain-containing protein 1 from Mus musculus (Mouse).